A 438-amino-acid polypeptide reads, in one-letter code: Serine--tRNA ligase (438 aa).

Position 243-245 (243-245) interacts with L-serine; that stretch reads TAE. ATP is bound at residue 274-276; that stretch reads RSE. Residue Glu-297 coordinates L-serine. ATP is bound at residue 361–364; it reads EISS. Ser-396 contacts L-serine.

The protein belongs to the class-II aminoacyl-tRNA synthetase family. Type-1 seryl-tRNA synthetase subfamily. Homodimer. The tRNA molecule binds across the dimer.

It is found in the cytoplasm. The catalysed reaction is tRNA(Ser) + L-serine + ATP = L-seryl-tRNA(Ser) + AMP + diphosphate + H(+). The enzyme catalyses tRNA(Sec) + L-serine + ATP = L-seryl-tRNA(Sec) + AMP + diphosphate + H(+). It participates in aminoacyl-tRNA biosynthesis; selenocysteinyl-tRNA(Sec) biosynthesis; L-seryl-tRNA(Sec) from L-serine and tRNA(Sec): step 1/1. In terms of biological role, catalyzes the attachment of serine to tRNA(Ser). Is also able to aminoacylate tRNA(Sec) with serine, to form the misacylated tRNA L-seryl-tRNA(Sec), which will be further converted into selenocysteinyl-tRNA(Sec). This Ralstonia pickettii (strain 12J) protein is Serine--tRNA ligase.